Reading from the N-terminus, the 851-residue chain is M-phase phosphoprotein 8 (851 aa).

Residues 21–54 form a disordered region; that stretch reads NIGRSPEVEGGGAAGEEKDAATKGTVAVGDSEED. Phosphoserine occurs at positions 51, 85, and 136. The Chromo domain occupies 59-118; that stretch reads FEVERILDMKCEGGKNLYKVRWKGYTSDDDTWEPEVHLEDCKEVLLEFRKKVAENKAKAV. The histone H3K9me3 binding stretch occupies residues 80–87; the sequence is WKGYTSDD. Residues 133–174 form a disordered region; that stretch reads EADSDIDQQGDTKEDTSPRKKKKKIKYKEDKSPDDLRKKRAK. Residue T144 is modified to Phosphothreonine. 2 positions are modified to phosphoserine; by CDK1: S149 and S164. The span at 159 to 169 shows a compositional bias: basic and acidic residues; that stretch reads YKEDKSPDDLR. A phosphoserine mark is found at S188, S263, S267, and S274. Positions 240 to 302 are disordered; that stretch reads REDVKDNRKT…KTGQDTVQES (63 aa). Positions 269-278 are enriched in acidic residues; it reads TLEDESEDFL. Residues 279–295 are compositionally biased toward basic and acidic residues; it reads SDNKEKQNVRTAKDKTG. At S313 the chain carries Phosphoserine. The segment at 315–428 is disordered; it reads EEAGTRVRRK…DKEEKARKEP (114 aa). Positions 329–364 are enriched in basic and acidic residues; the sequence is RKFEEPKEIKKLENTNNFLERKMIPKKQRNQDKGRS. T379 carries the phosphothreonine; by CDK1 modification. Phosphoserine is present on residues S386 and S394. A compositionally biased stretch (basic and acidic residues) spans 401–428; sequence EKERKNEPKEKYQKRYDFDKEEKARKEP. A Phosphothreonine modification is found at T447. ANK repeat units follow at residues 591–620, 624–653, 657–686, and 690–719; these read TGMT…KVNG, NGTT…FVNV, NGET…DCNI, and HQNS…TLSR.

As to quaternary structure, homodimer. Interacts (via chromo domain) with histone H3K9me3. Has the highest affinity for H3K9me3, and lesser affinity for H3K9me2 and H3K9me1. Component of the HUSH complex; at least composed of TASOR, PPHLN1 and MPHOSPH8. Interacts with DNMT3, EHMT1 and SETDB1. Interacts with MORC2; the interaction associateS MORC2 with the HUSH complex which recruits MORC2 to heterochromatic loci. Interacts with ZNF638; leading to recruitment of the HUSH complex to unintegrated retroviral DNA. Interacts with TASOR. Phosphorylated in M (mitotic) phase. Phosphorylation by CDK1 promotes dissociation from chromatin.

It is found in the nucleus. It localises to the chromosome. Its function is as follows. Heterochromatin component that specifically recognizes and binds methylated 'Lys-9' of histone H3 (H3K9me) and promotes recruitment of proteins that mediate epigenetic repression. Mediates recruitment of the HUSH complex to H3K9me3 sites: the HUSH complex is recruited to genomic loci rich in H3K9me3 and is required to maintain transcriptional silencing by promoting recruitment of SETDB1, a histone methyltransferase that mediates further deposition of H3K9me3, as well as MORC2. Binds H3K9me and promotes DNA methylation by recruiting DNMT3A to target CpG sites; these can be situated within the coding region of the gene. Mediates down-regulation of CDH1 expression. Also represses L1 retrotransposons in collaboration with MORC2 and, probably, SETDB1, the silencing is dependent of repressive epigenetic modifications, such as H3K9me3 mark. Silencing events often occur within introns of transcriptionally active genes, and lead to the down-regulation of host gene expression. The HUSH complex is also involved in the silencing of unintegrated retroviral DNA by being recruited by ZNF638: some part of the retroviral DNA formed immediately after infection remains unintegrated in the host genome and is transcriptionally repressed. The polypeptide is M-phase phosphoprotein 8 (Rattus norvegicus (Rat)).